Reading from the N-terminus, the 762-residue chain is Polymeric immunoglobulin receptor (762 aa).

Positions 1–18 are cleaved as a signal peptide; sequence MTLFFLTCLLAVFPVVSM. The region spanning 19 to 120 is the Ig-like V-type 1; required for binding to polymeric IgA and IgM domain; it reads KSPIFGPPEI…GVGINNRGLS (102 aa). At 19 to 636 the chain is on the extracellular side; sequence KSPIFGPPEI…SSAGQGGSSK (618 aa). 2 disulfide bridges follow: Cys40/Cys110 and Cys56/Cys64. Asn83 and Asn135 each carry an N-linked (GlcNAc...) asparagine glycan. 4 consecutive Ig-like V-type domains span residues 145-238, 251-351, 363-460, and 464-563; these read GGKV…DLHV, GSSV…ETTF, GGSV…LKIV, and PNLK…VYVA. 8 disulfides stabilise this stretch: Cys152–Cys221, Cys258–Cys324, Cys272–Cys280, Cys370–Cys443, Cys384–Cys394, Cys484–Cys546, Cys488–Cys522, and Cys498–Cys505. Residue Asn291 is glycosylated (N-linked (GlcNAc...) asparagine). The N-linked (GlcNAc...) asparagine glycan is linked to Asn423. Asn530 is a glycosylation site (N-linked (GlcNAc...) asparagine). Residues 604–634 form a disordered region; the sequence is FVDTQAKDPEDAAGGSIASADPGSSAGQGGS. A helical membrane pass occupies residues 637–659; the sequence is VVVSTLVPLALVLALGVLVVGVL. Residues 660-762 lie on the Cytoplasmic side of the membrane; that stretch reads RARHRKNVDR…ANIQDGPSKA (103 aa).

Interacts (mainly via CDR1-like domain) with dimeric IgA. Interacts (mainly via CDR2-like domain) with pentameric IgM. In terms of assembly, either free or part of the secretory IgA (sIgA) complex that consists of two, four or five IgA monomers, and two additional non-Ig polypeptides, namely the JCHAIN and the secretory component (the proteolytic product of PIGR). Free secretory component interacts with bacterial antigens toxA of C.difficile and eae of E.coli. N-glycosylated. Carries predominantly biantennary complex type glycans which are largely non-fucosylated. Sialylation with NeuAc is common, except for Asn-291 which carries exclusively high mannose glycans. N-glycans attached to Asn-83: Gal2GlcNAc2Man3GlcNAc2; Gal2GlcNAc2Man3GlcNAc2(Fuc); Gal1GlcNAc1Man4GlcNAc2(Fuc); Gal1GlcNAc1Man3GlcNAc2; Gal1GlcNAc1Man4GlcNAc2 and NeuAc1Gal2GlcNAc2Man3GlcNAc2. N-glycans attached to Asn-135: Gal2GlcNAc2Man3GlcNAc2; Gal1GlcNAc1Man3GlcNAc2 and NeuAc1Gal2GlcNAc2Man3GlcNAc2. N-glycans attached to Asn-291: Man5-8GlcNAc2. N-glycans attached to Asn-423: NeuAc1Gal2GlcNAc2Man3GlcNAc2. N-glycans attached to Asn-530: Gal2GlcNAc2Man3GlcNAc2; Gal1GlcNAc1Man3GlcNAc2 and NeuAc1Gal2GlcNAc2Man3GlcNAc2. N-glycosylation is required for anchoring IgA molecules to mucus but is not necessary for Ig binding.

The protein resides in the cell membrane. The protein localises to the secreted. Functionally, mediates selective transcytosis of polymeric IgA and IgM across mucosal epithelial cells. Binds polymeric IgA and IgM at the basolateral surface of epithelial cells. The complex is then transported across the cell to be secreted at the apical surface. During this process, a cleavage occurs that separates the extracellular (known as the secretory component) from the transmembrane segment. In terms of biological role, through its N-linked glycans ensures anchoring of secretory IgA (sIgA) molecules to mucus lining the epithelial surface to neutralize extracellular pathogens. On its own (free form) may act as a non-specific microbial scavenger to prevent pathogen interaction with epithelial cells. This chain is Polymeric immunoglobulin receptor (PIGR), found in Equus asinus (Donkey).